Here is a 216-residue protein sequence, read N- to C-terminus: Protein GrpE (216 aa).

2 disordered regions span residues 1–45 (MTEE…LDPT) and 185–216 (RVAVAEPQPGATPAAAKEEKTDDEESGGTEEV). Over residues 205–216 (TDDEESGGTEEV) the composition is skewed to acidic residues.

The protein belongs to the GrpE family. As to quaternary structure, homodimer.

The protein localises to the cytoplasm. Functionally, participates actively in the response to hyperosmotic and heat shock by preventing the aggregation of stress-denatured proteins, in association with DnaK and GrpE. It is the nucleotide exchange factor for DnaK and may function as a thermosensor. Unfolded proteins bind initially to DnaJ; upon interaction with the DnaJ-bound protein, DnaK hydrolyzes its bound ATP, resulting in the formation of a stable complex. GrpE releases ADP from DnaK; ATP binding to DnaK triggers the release of the substrate protein, thus completing the reaction cycle. Several rounds of ATP-dependent interactions between DnaJ, DnaK and GrpE are required for fully efficient folding. The protein is Protein GrpE of Streptomyces griseus subsp. griseus (strain JCM 4626 / CBS 651.72 / NBRC 13350 / KCC S-0626 / ISP 5235).